Here is a 1427-residue protein sequence, read N- to C-terminus: Multidrug resistance-associated protein 5 (1427 aa).

Residues 1–147 (MPSDSEEVCL…IYRFISTRLW (147 aa)) are Cytoplasmic-facing. A helical transmembrane segment spans residues 148-168 (FSCAVFFFCLIFGFIGPTCFI). The 282-residue stretch at 151–432 (AVFFFCLIFG…IPYGSRYLAE (282 aa)) folds into the ABC transmembrane type-1 1 domain. The Extracellular segment spans residues 169–185 (RRLIAFAENPERDEQSR). Residues 186–206 (IVYSYGIALVAAISVVEFARV) form a helical membrane-spanning segment. The Cytoplasmic portion of the chain corresponds to 207 to 268 (LSYGATWAVS…RLFDAVTFAP (62 aa)). Residues 269–289 (LVLVGPLVLVGGIGYLLMVIG) form a helical membrane-spanning segment. Arg-290 is a topological domain (extracellular). Residues 291 to 311 (WSLLGILVFFVFDVIQFGLGK) form a helical membrane-spanning segment. Over 312 to 375 (SMVACRNLAI…RKSGYAQSLA (64 aa)) the chain is Cytoplasmic. Residues 376 to 396 (IACGPVVPVVAAILTFVGVVL) form a helical membrane-spanning segment. Residues 397-399 (AGN) lie on the Extracellular side of the membrane. A helical membrane pass occupies residues 400–420 (DLLASDAFSAITVYFVMLFGI). Over 421-770 (RMIPYGSRYL…TIAWRIYKQY (350 aa)) the chain is Cytoplasmic. An ABC transporter 1 domain is found at 486–707 (PTENEVIVVE…NDAYKTFVDA (222 aa)). 518–525 (GAVGCGKS) lines the ATP pocket. The helical transmembrane segment at 771 to 791 (IHAAGGWPIWTCLVIGFIVNV) threads the bilayer. The ABC transmembrane type-1 2 domain occupies 783–1078 (LVIGFIVNVV…AVRTQTELEA (296 aa)). Topologically, residues 792-833 (VSNIFSTYWLSRWLKKGHDETTTITNGTEFLEMKTSLADSPV) are extracellular. Asn-817 carries an N-linked (GlcNAc...) asparagine glycan. Residues 834-854 (TGFYAAVYLVALVVLTISGLF) traverse the membrane as a helical segment. The Cytoplasmic segment spans residues 855–909 (KACVFVKVSLTAATRLHDRMFQAVIHGATSFFDSTPTGRILNRFSKDMDEIDVKL). Residues 910 to 930 (PFTAEVFLQNMITCLGFLVVI) traverse the membrane as a helical segment. Thr-931 is a topological domain (extracellular). Residues 932 to 952 (SVFPYFLLFAIPLFVVFVVFV) traverse the membrane as a helical segment. Residues 953 to 1022 (SCFRAGIRNL…MFQSAMRWLA (70 aa)) lie on the Cytoplasmic side of the membrane. A helical transmembrane segment spans residues 1023–1043 (VWLDLLVVVMTAIVALLTVML). At 1044 to 1049 (TGTVSP) the chain is on the extracellular side. A helical transmembrane segment spans residues 1050 to 1070 (ADAGMAIAFAVQMSGIFQFAV). Residues 1071-1427 (RTQTELEAKM…SSDTDIEVVQ (357 aa)) are Cytoplasmic-facing. In terms of domain architecture, ABC transporter 2 spans 1117–1351 (INFSEVNLRY…DWSVYKLEDK (235 aa)). 1151-1158 (GRTGSGKS) lines the ATP pocket. Positions 1361–1427 (VGENSEHSME…SSDTDIEVVQ (67 aa)) are disordered. A compositionally biased stretch (basic and acidic residues) spans 1382 to 1418 (DIVKVENEQKDSSDDVVHIESGDDDVKADSSEVKETS).

This sequence belongs to the ABC transporter superfamily. ABCC family. Conjugate transporter (TC 3.A.1.208) subfamily. As to expression, highly expressed in the intestine and pharynx. Expressed at low levels in the hypodermis and in some neurons.

It is found in the basolateral cell membrane. Heme transporter required for the export of intestinal heme to different tissues and subcellular compartments. Also, required for the export of vitamin B12 from the intestine of the mother to the embryo to support embryonic development. The chain is Multidrug resistance-associated protein 5 from Caenorhabditis elegans.